Consider the following 105-residue polypeptide: N(2)-fixation sustaining protein CowN (105 aa).

It belongs to the CowN family.

In terms of biological role, is required to sustain N(2)-dependent growth in the presence of low levels of carbon monoxide (CO). Probably acts by protecting the N(2) fixation ability of the nitrogenase complex, which is inactivated in the presence of CO. The sequence is that of N(2)-fixation sustaining protein CowN from Tolumonas auensis (strain DSM 9187 / NBRC 110442 / TA 4).